Consider the following 504-residue polypeptide: ATP synthase subunit alpha (504 aa).

169-176 (GDRQTGKT) is an ATP binding site.

The protein belongs to the ATPase alpha/beta chains family. In terms of assembly, F-type ATPases have 2 components, CF(1) - the catalytic core - and CF(0) - the membrane proton channel. CF(1) has five subunits: alpha(3), beta(3), gamma(1), delta(1), epsilon(1). CF(0) has three main subunits: a(1), b(2) and c(9-12). The alpha and beta chains form an alternating ring which encloses part of the gamma chain. CF(1) is attached to CF(0) by a central stalk formed by the gamma and epsilon chains, while a peripheral stalk is formed by the delta and b chains.

The protein resides in the cell membrane. It carries out the reaction ATP + H2O + 4 H(+)(in) = ADP + phosphate + 5 H(+)(out). Its function is as follows. Produces ATP from ADP in the presence of a proton gradient across the membrane. The alpha chain is a regulatory subunit. The sequence is that of ATP synthase subunit alpha from Clostridium botulinum (strain ATCC 19397 / Type A).